Consider the following 230-residue polypeptide: MYDIKKWRHIFKLDSAKHISDDDLDAICMSQTDAIMIGGTDDVTEDNVIHLMSRVRRYPLPLVLEISNIESVMPGFDFYFVPTVLNSTDVAFHNGTLLEALKTYGHSIDFEEVIFEGYVVCNADSKVAKHTKANTDLTTEDLEAYAQMVNHMYRLPVMYIEYSGIYGDVSKVQAVSEHLTETQLFYGGGISSEQQATEMAAIADTIIVGDIIYKDIKKALKTVKIKESSK.

Position 12 (lysine 12) interacts with sn-glycerol 1-phosphate. Mg(2+)-binding residues include aspartate 14 and threonine 40. Sn-glycerol 1-phosphate-binding positions include 159–164, glycine 189, and 209–210; these read YIEYSG and GD.

Belongs to the GGGP/HepGP synthase family. Group I subfamily. Homodimer. The cofactor is Mg(2+).

The catalysed reaction is sn-glycerol 1-phosphate + all-trans-heptaprenyl diphosphate = 3-heptaprenyl-sn-glycero-1-phosphate + diphosphate. The protein operates within membrane lipid metabolism; glycerophospholipid metabolism. In terms of biological role, prenyltransferase that catalyzes in vivo the transfer of the heptaprenyl moiety of heptaprenyl pyrophosphate (HepPP; 35 carbon atoms) to the C3 hydroxyl of sn-glycerol-1-phosphate (G1P), producing heptaprenylglyceryl phosphate (HepGP). This reaction is an ether-bond-formation step in the biosynthesis of archaea-type G1P-based membrane lipids found in Bacillales. This is Heptaprenylglyceryl phosphate synthase from Staphylococcus aureus (strain bovine RF122 / ET3-1).